The sequence spans 351 residues: Heat-inducible transcription repressor HrcA (351 aa).

This sequence belongs to the HrcA family.

In terms of biological role, negative regulator of class I heat shock genes (grpE-dnaK-dnaJ and groELS operons). Prevents heat-shock induction of these operons. This Clostridium tetani (strain Massachusetts / E88) protein is Heat-inducible transcription repressor HrcA.